The primary structure comprises 290 residues: Membrane protein insertase YidC (290 aa).

The signal sequence occupies residues 1–19 (MKKKALLPLFLGIMVFLAG). A lipid anchor (N-palmitoyl cysteine) is attached at cysteine 20. Cysteine 20 carries S-diacylglycerol cysteine lipidation. 5 consecutive transmembrane segments (helical) span residues 56 to 76 (YGLA…PFML), 134 to 154 (MLGC…YFVL), 176 to 196 (PDIW…YVSS), 207 to 224 (GYMM…ISLS), and 229 to 251 (LGLY…NIYY). Residues 270 to 290 (HNGGSNKKGKNTQVVSKKKKK) are disordered.

The protein belongs to the OXA1/ALB3/YidC family. Type 2 subfamily.

It localises to the cell membrane. Required for the insertion and/or proper folding and/or complex formation of integral membrane proteins into the membrane. Involved in integration of membrane proteins that insert both dependently and independently of the Sec translocase complex, as well as at least some lipoproteins. This is Membrane protein insertase YidC from Staphylococcus aureus (strain Mu3 / ATCC 700698).